We begin with the raw amino-acid sequence, 573 residues long: DNA polymerase lambda (573 aa).

In terms of domain architecture, BRCT spans 35 to 131 (DARGWLSSLR…KLTDTDGFSL (97 aa)). Positions 126–235 (TDGFSLSSPK…GPDPAPEALG (110 aa)) are disordered. Residues 127-149 (DGFSLSSPKRSLNEPQPSKSGQD) show a composition bias toward polar residues. Residues 263-277 (KAYNVQGDKWRALGY) are DNA-binding. Lys310 (schiff-base intermediate with DNA) is an active-site residue. A DNA-binding region spans residues 343-346 (GTKT). DCTP contacts are provided by residues Arg384, 415 to 418 (SFRR), and 424 to 427 (GDVD). The interval 418–427 (RGKVTCGDVD) is involved in primer binding. Mn(2+) contacts are provided by Asp425, Asp427, and Asp488. A DNA-binding region spans residues 464-503 (ENGQQQKYLGVCRLPGAGQRHRRLDIIVVPYSEFACALLY). Asn511 contacts dCTP.

The protein belongs to the DNA polymerase type-X family. As to quaternary structure, interacts with PCNA. Interacts with PAXX; promoting POLL recruitment to double-strand breaks (DSBs) and stimulation of the end-filling activity of POLL. Interacts with XRCC4; promoting POLL recruitment to double-strand breaks (DSBs) and stimulation of the end-filling activity of POLL. Interacts with NHEJ1/XLF; promoting POLL recruitment to double-strand breaks (DSBs) and stimulation of the end-filling activity of POLL. Requires Mn(2+) as cofactor.

The protein resides in the nucleus. It carries out the reaction DNA(n) + a 2'-deoxyribonucleoside 5'-triphosphate = DNA(n+1) + diphosphate. Functionally, DNA polymerase that functions in several pathways of DNA repair. Involved in base excision repair (BER) responsible for repair of lesions that give rise to abasic (AP) sites in DNA. Also contributes to DNA double-strand break repair by non-homologous end joining and homologous recombination. Has both template-dependent and template-independent (terminal transferase) DNA polymerase activities. Also has a 5'-deoxyribose-5-phosphate lyase (dRP lyase) activity. In Rattus norvegicus (Rat), this protein is DNA polymerase lambda.